A 238-amino-acid chain; its full sequence is MTRLSVNVNKIATLRNARGGNVPDVLRVALDCERFGAQGITVHPRPDERHIRRSDVYDLKKALTTEFNIEGNPDERFIRLIEEIRPEQVTMVPDAPDVLTSNAGWDVARNYDHLCRLVEQFHAWGIRTSIFIDTDLDNISWAAKTGTDRIELYTEPYAAAYHKDMAAAVQPYVKASAHAHSLGLGINAGHDLNLDNLRYFAERLPYLDEVSIGHALIADALYLGLEETIRQYRDQLAL.

Residues asparagine 7 and arginine 18 each contribute to the 3-amino-2-oxopropyl phosphate site. Histidine 43 functions as the Proton acceptor in the catalytic mechanism. 2 residues coordinate 1-deoxy-D-xylulose 5-phosphate: arginine 45 and histidine 50. Glutamate 70 serves as the catalytic Proton acceptor. Threonine 100 provides a ligand contact to 1-deoxy-D-xylulose 5-phosphate. Histidine 190 functions as the Proton donor in the catalytic mechanism. 3-amino-2-oxopropyl phosphate contacts are provided by residues aspartate 191 and 213 to 214; that span reads GH.

This sequence belongs to the PNP synthase family. In terms of assembly, homooctamer; tetramer of dimers.

It is found in the cytoplasm. It catalyses the reaction 3-amino-2-oxopropyl phosphate + 1-deoxy-D-xylulose 5-phosphate = pyridoxine 5'-phosphate + phosphate + 2 H2O + H(+). It participates in cofactor biosynthesis; pyridoxine 5'-phosphate biosynthesis; pyridoxine 5'-phosphate from D-erythrose 4-phosphate: step 5/5. Functionally, catalyzes the complicated ring closure reaction between the two acyclic compounds 1-deoxy-D-xylulose-5-phosphate (DXP) and 3-amino-2-oxopropyl phosphate (1-amino-acetone-3-phosphate or AAP) to form pyridoxine 5'-phosphate (PNP) and inorganic phosphate. This Porphyromonas gingivalis (strain ATCC 33277 / DSM 20709 / CIP 103683 / JCM 12257 / NCTC 11834 / 2561) protein is Pyridoxine 5'-phosphate synthase.